The primary structure comprises 840 residues: MKNWGSSDSGGSEDPPQEDSCLDPLDGDPNSRPVPAKPHIFPTAKSRSRLFGKCDSEEASMDCSYEEGQLASCPAITVSPVVMIPKHEDGPTCARQPSQDSVTAGSEKSLKLYDRRKIFEAVAQNNCEELQSLLLFLQKSKKHLMDSEFKDPETGKTCLLKAMLNLHDGQNDTIPLLLEIARQTDSLKELVNASYTDSYYKGQTALHIAIERRNMALVTLLVENGADVQAAANGDFFKKTKGRPGFYFGELPLSLAACTNQLGIVKFLLQNSWQPADISARDSVGNTVLHALVEVADNTADNTKFVTSMYNEILILGAKLHPTLKLEGLTNKKGLTPLALAARSGKIGVLAYILQREIQEPECRHLSRKFTEWAYGPVHSSLYDLSCIDTCEKNSVLEVIAYSSSETPNRHDMLLVEPLNRLLQDKWDRFVKRIFYFNFFIYCLYMIIFTTAAYYRPVDGLPPYKLKHTVGDYFRVTGEILSVLGGVYFFFRGIQYFLQRRPSLKTLFVDSYSEMLFFVQSLFMLGTVVLYFCHHKEYVASMVFSLAMGWTNMLYYTRGFQQMGIYAVMIEKMILRDLCRFMFVYLVFLFGFSTAVVTLIEDGKNNSVPTESTLHRWRGPGCRPPDSSYNSLYSTCLELFKFTIGMGDLEFTENYDFKAVFIILLLAYVILTYILLLNMLIALMGETVNKIAQESKNIWKLQRAITILDTEKSFLKCMRKAFRSGKLLQVGYTPDGKDDYRWCFRVDEVNWTTWNTNVGIINEDPGNCEGIKRTLSFSLRSGRVSGRNWKNFSLVPLLRDASTRERHPAQPEEVHLRHFAGSLKPEDAEIFKDPVGLGEK.

Low complexity predominate over residues 1–12 (MKNWGSSDSGGS). Positions 1 to 43 (MKNWGSSDSGGSEDPPQEDSCLDPLDGDPNSRPVPAKPHIFPT) are disordered. The Cytoplasmic portion of the chain corresponds to 1 to 433 (MKNWGSSDSG…QDKWDRFVKR (433 aa)). ANK repeat units follow at residues 111–139 (KLYD…FLQK) and 154–186 (TGKT…QTDS). ATP-binding positions include Arg-116, Lys-156, Lys-161, Asn-165, 200 to 203 (YKGQ), and 211 to 212 (ER). 4 ANK repeats span residues 204-229 (TALH…ADVQ), 250-277 (ELPL…QPAD), 286-322 (NTVL…KLHP), and 336-359 (TPLA…REIQ). Thr-371 is modified (phosphothreonine; by PKA; in vitro). An ANK 7 repeat occupies 394–416 (NSVLEVIAYSSSETPNRHDMLLV). The helical transmembrane segment at 434-455 (IFYFNFFIYCLYMIIFTTAAYY) threads the bilayer. At 456–473 (RPVDGLPPYKLKHTVGDY) the chain is on the extracellular side. A helical transmembrane segment spans residues 474-498 (FRVTGEILSVLGGVYFFFRGIQYFL). Topologically, residues 499–511 (QRRPSLKTLFVDS) are cytoplasmic. The residue at position 503 (Ser-503) is a Phosphoserine; by PKC/PRKCE. Residue 512-513 (YS) coordinates resiniferatoxin. The helical transmembrane segment at 512 to 533 (YSEMLFFVQSLFMLGTVVLYFC) threads the bilayer. Over 534 to 536 (HHK) the chain is Extracellular. Residues 537–557 (EYVASMVFSLAMGWTNMLYYT) form a helical membrane-spanning segment. Residues Thr-551 and Arg-558 each contribute to the resiniferatoxin site. Residues 558-560 (RGF) lie on the Cytoplasmic side of the membrane. A helical transmembrane segment spans residues 561–599 (QQMGIYAVMIEKMILRDLCRFMFVYLVFLFGFSTAVVTL). Over 600-631 (IEDGKNNSVPTESTLHRWRGPGCRPPDSSYNS) the chain is Extracellular. Asn-605 carries N-linked (GlcNAc...) asparagine glycosylation. Residues 632–653 (LYSTCLELFKFTIGMGDLEFTE) constitute an intramembrane region (pore-forming). Position 645 (Gly-645) interacts with Na(+). A Selectivity filter motif is present at residues 645 to 648 (GMGD). Asp-648 lines the Ca(2+) pocket. Residues 654–657 (NYDF) are Extracellular-facing. A helical transmembrane segment spans residues 658–684 (KAVFIILLLAYVILTYILLLNMLIALM). Residues 685–840 (GETVNKIAQE…FKDPVGLGEK (156 aa)) lie on the Cytoplasmic side of the membrane. An AD region spans residues 686-714 (ETVNKIAQESKNIWKLQRAITILDTEKSF). Thr-706 carries the post-translational modification Phosphothreonine. Positions 769-803 (EGIKRTLSFSLRSGRVSGRNWKNFSLVPLLRDAST) are interaction with calmodulin. Ser-776 bears the Phosphoserine mark. Positions 779–794 (LRSGRVSGRNWKNFSL) are required for PIP2-mediated channel inhibition. A Phosphoserine; by PKC/PRKCE and PKC/PRKCZ modification is found at Ser-802. Ser-822 is subject to Phosphoserine.

Belongs to the transient receptor (TC 1.A.4) family. TrpV subfamily. TRPV1 sub-subfamily. In terms of assembly, homotetramer. Interacts with PIRT. May also form a heteromeric channel with TRPV3. Interacts with CALM, PRKCM and CSK. Interacts with PRKCG and NTRK1, probably by forming a trimeric complex. Interacts with the Scolopendra mutilans RhTx toxin. Interacts with TMEM100. Interacts with PACS2. Phosphorylation by PKA reverses capsaicin-induced dephosphorylation at multiple sites. Phosphorylation by CAMKII seems to regulate binding to vanilloids. Phosphorylated and modulated by PRKCE, PRKCM and probably PRKCZ. Dephosphorylation by calcineurin seems to lead to receptor desensitization and phosphorylation by CAMKII recovers activity.

The protein localises to the postsynaptic cell membrane. It is found in the cell projection. The protein resides in the dendritic spine membrane. Its subcellular location is the cell membrane. It catalyses the reaction Ca(2+)(in) = Ca(2+)(out). The enzyme catalyses Mg(2+)(in) = Mg(2+)(out). It carries out the reaction Na(+)(in) = Na(+)(out). The catalysed reaction is K(+)(in) = K(+)(out). With respect to regulation, channel activity is activated via the interaction with PIRT and phosphatidylinositol 4,5-bisphosphate (PIP2). Both PIRT and PIP2 are required to activate channel activity. The channel is sensitized by ATP binding. Repeated stimulation with capsaicin gives rise to progressively smaller responses, due to desensitization. This desensitization is triggered by the influx of calcium ions and is inhibited by elevated ATP levels. Ca(2+) and CALM displace ATP from its binding site and trigger a conformation change that leads to a closed, desensitized channel. Intracellular PIP2 inhibits desensitization. The double-knot toxin (DkTx) from the Chinese earth tiger tarantula activates the channel and traps it in an open conformation. The Scolopendra mutilans RhTx toxin potentiates the heat activation pathway mediated by this channel by binding to the charge-rich outer pore region (in an activated state). Non-selective calcium permeant cation channel involved in detection of noxious chemical and thermal stimuli. Seems to mediate proton influx and may be involved in intracellular acidosis in nociceptive neurons. Involved in mediation of inflammatory pain and hyperalgesia. Sensitized by a phosphatidylinositol second messenger system activated by receptor tyrosine kinases, which involves PKC isozymes and PCL. Activated by vanilloids, like capsaicin, and temperatures higher than 42 degrees Celsius. Upon activation, exhibits a time- and Ca(2+)-dependent outward rectification, followed by a long-lasting refractory state. Mild extracellular acidic pH (6.5) potentiates channel activation by noxious heat and vanilloids, whereas acidic conditions (pH &lt;6) directly activate the channel. Can be activated by endogenous compounds, including 12-hydroperoxytetraenoic acid and bradykinin. Acts as ionotropic endocannabinoid receptor with central neuromodulatory effects. Triggers a form of long-term depression (TRPV1-LTD) mediated by the endocannabinoid anandamine in the hippocampus and nucleus accumbens by affecting AMPA receptors endocytosis. The sequence is that of Transient receptor potential cation channel subfamily V member 1 (TRPV1) from Canis lupus familiaris (Dog).